We begin with the raw amino-acid sequence, 373 residues long: Flagellar P-ring protein (373 aa).

Positions 1–26 (MKLFFRFLTLVAVLAMSLADVAPAWA) are cleaved as a signal peptide.

Belongs to the FlgI family. The basal body constitutes a major portion of the flagellar organelle and consists of four rings (L,P,S, and M) mounted on a central rod.

The protein localises to the periplasm. It is found in the bacterial flagellum basal body. Its function is as follows. Assembles around the rod to form the L-ring and probably protects the motor/basal body from shearing forces during rotation. The protein is Flagellar P-ring protein of Rhizobium leguminosarum bv. trifolii (strain WSM2304).